Reading from the N-terminus, the 622-residue chain is Putative E3 ubiquitin-protein ligase ORTHRUS 4 (622 aa).

A PHD-type zinc finger spans residues 12–62; that stretch reads DGVCMRCQVTPPSEETLTCGTCVTPWHVSCLLPESLASSTGDWECPDCSGV. An RING-type 1 zinc finger spans residues 129–169; sequence CSICIQLPERPVTTPCGHNFCLKCFEKWAVGQGKLTCMICR. One can recognise a YDG domain in the interval 258–407; it reads TRNQGVLVGE…HKMCRYLFVR (150 aa). An RING-type 2 zinc finger spans residues 498–555; the sequence is CQICRKVLSLPVTTPCAHNFCKACLEAKFAGITQLRDRSNGVRKLRAKKNIMTCPCCT. Residues 566–602 adopt a coiled-coil conformation; that stretch reads QVNREMMEIIENFKKSEEEAEVAESSNISEEEEEESE. The segment at 579-622 is disordered; the sequence is KKSEEEAEVAESSNISEEEEEESEPPTKKIKMDNNSVGDTSLSA. Polar residues predominate over residues 611–622; the sequence is DNNSVGDTSLSA.

The protein localises to the nucleus. It carries out the reaction S-ubiquitinyl-[E2 ubiquitin-conjugating enzyme]-L-cysteine + [acceptor protein]-L-lysine = [E2 ubiquitin-conjugating enzyme]-L-cysteine + N(6)-ubiquitinyl-[acceptor protein]-L-lysine.. It functions in the pathway protein modification; protein ubiquitination. Functionally, E3 ubiquitin-protein ligase. May participate in CpG methylation-dependent transcriptional regulation. The protein is Putative E3 ubiquitin-protein ligase ORTHRUS 4 (ORTH4) of Arabidopsis thaliana (Mouse-ear cress).